The following is a 250-amino-acid chain: MSDTTSTIIFEHPLNEKMRAWLRIESSLQQLTSQRHLNSLASSLAFFRTITELLEVLERGEVRSELLKELERQQAKLKQWAEIPDVDINIVNSFRLKLKERAIALSKAPRLGQSLKEDKIISLVRQRLSIPSGCCGFDLPTLHLWLHLPQSERDKMVAFWIDSLLPLQQALDSILELIRQSAIFRSEISKNGFHQNTAEGADLLRLRLPLTPLLFPQISGHKTRFAIRFLPLDSEKGSVPAHLPFELACC.

It belongs to the ZapD family. As to quaternary structure, interacts with FtsZ.

The protein localises to the cytoplasm. In terms of biological role, cell division factor that enhances FtsZ-ring assembly. Directly interacts with FtsZ and promotes bundling of FtsZ protofilaments, with a reduction in FtsZ GTPase activity. The sequence is that of Cell division protein ZapD from Photorhabdus laumondii subsp. laumondii (strain DSM 15139 / CIP 105565 / TT01) (Photorhabdus luminescens subsp. laumondii).